The following is a 132-amino-acid chain: UPF0299 membrane protein YohJ (132 aa).

The next 4 membrane-spanning stretches (helical) occupy residues 8–28 (IWQY…GIFI), 31–51 (LLPV…VLLA), 63–83 (GCYL…VGVM), and 93–113 (FGPV…VVSW).

The protein belongs to the UPF0299 family.

The protein localises to the cell inner membrane. This Escherichia fergusonii (strain ATCC 35469 / DSM 13698 / CCUG 18766 / IAM 14443 / JCM 21226 / LMG 7866 / NBRC 102419 / NCTC 12128 / CDC 0568-73) protein is UPF0299 membrane protein YohJ.